The sequence spans 453 residues: TRLDGFICSKCGETFTVNSHLLTHLCGKHERIYSREKLYSCTECRRTFTTDTELQSHQMIYMERDPFTCTECGKSFSERDNLKCHHKTHTGEKPFTCMECGKGFSVKSSLKHHYKAHITEKAVRCTECGKEFTSKYYLNVHKRLHTGEKPFTCTQCGKCFSDKSALKYHHKTHTGEKPFACTECGKSFTEKSILQKHQRTHTGEKPFTCTECGKSYSAMSTLECHRRTHTGEKPFTCTECGKSFTEKSILRKHHKTHTGEKPFTCTECGKSCTEKSILRKHQITHTGEKPFTCTECGKCFSDKTALKYHHKTHTGEKPFACTECGKSFTDKSILRNHQRTHTGEKPFTCTECGKSYSAMSTLKSDRRTHTGEKPFTCTECGKSFTEKSILRKHHKTHTGEKPFTCTECGKSFTHKSILQKHQRTHTGEKPFTCTECGKCFSDKTAIKYHRITH.

14 consecutive C2H2-type zinc fingers follow at residues 6–29 (FICS…CGKH), 67–89 (FTCT…HKTH), 95–117 (FTCM…YKAH), 123–145 (VRCT…KRLH), 151–173 (FTCT…HKTH), 179–201 (FACT…QRTH), 207–229 (FTCT…RRTH), 235–257 (FTCT…HKTH), 263–285 (FTCT…QITH), 291–313 (FTCT…HKTH), 319–341 (FACT…QRTH), 375–397 (FTCT…HKTH), 403–425 (FTCT…QRTH), and 431–453 (FTCT…RITH).

This sequence belongs to the krueppel C2H2-type zinc-finger protein family.

It is found in the nucleus. May be involved in transcriptional regulation. The sequence is that of Oocyte zinc finger protein XlCOF6 from Xenopus laevis (African clawed frog).